The following is a 488-amino-acid chain: Lysine--tRNA ligase (488 aa).

Positions 397 and 404 each coordinate Mg(2+).

The protein belongs to the class-II aminoacyl-tRNA synthetase family. In terms of assembly, homodimer. Mg(2+) serves as cofactor.

It is found in the cytoplasm. The catalysed reaction is tRNA(Lys) + L-lysine + ATP = L-lysyl-tRNA(Lys) + AMP + diphosphate. The chain is Lysine--tRNA ligase (lysS) from Mycoplasmopsis fermentans (strain ATCC 19989 / NBRC 14854 / NCTC 10117 / PG18) (Mycoplasma fermentans).